The chain runs to 111 residues: Large ribosomal subunit protein eL31 (111 aa).

The protein belongs to the eukaryotic ribosomal protein eL31 family.

The protein is Large ribosomal subunit protein eL31 (RPL31) of Tetrahymena thermophila (strain SB210).